Here is a 101-residue protein sequence, read N- to C-terminus: CRISPR-associated endoribonuclease Cas2 (101 aa).

Residue Asp8 participates in Mg(2+) binding.

It belongs to the CRISPR-associated endoribonuclease Cas2 protein family. Homodimer, forms a heterotetramer with a Cas1 homodimer. It depends on Mg(2+) as a cofactor.

Its function is as follows. CRISPR (clustered regularly interspaced short palindromic repeat), is an adaptive immune system that provides protection against mobile genetic elements (viruses, transposable elements and conjugative plasmids). CRISPR clusters contain sequences complementary to antecedent mobile elements and target invading nucleic acids. CRISPR clusters are transcribed and processed into CRISPR RNA (crRNA). Functions as a ssRNA-specific endoribonuclease. Involved in the integration of spacer DNA into the CRISPR cassette. The polypeptide is CRISPR-associated endoribonuclease Cas2 (Lacticaseibacillus rhamnosus (strain ATCC 53103 / LMG 18243 / GG) (Lactobacillus rhamnosus)).